A 100-amino-acid polypeptide reads, in one-letter code: Urease subunit gamma (100 aa).

The protein belongs to the urease gamma subunit family. As to quaternary structure, heterotrimer of UreA (gamma), UreB (beta) and UreC (alpha) subunits. Three heterotrimers associate to form the active enzyme.

The protein localises to the cytoplasm. It carries out the reaction urea + 2 H2O + H(+) = hydrogencarbonate + 2 NH4(+). The protein operates within nitrogen metabolism; urea degradation; CO(2) and NH(3) from urea (urease route): step 1/1. The polypeptide is Urease subunit gamma (Rhodopseudomonas palustris (strain BisA53)).